The following is a 412-amino-acid chain: Multifunctional CCA protein (412 aa).

Gly8 and Arg11 together coordinate ATP. CTP is bound by residues Gly8 and Arg11. Residues Asp21 and Asp23 each contribute to the Mg(2+) site. ATP-binding residues include Arg91, Arg137, and Arg140. CTP is bound by residues Arg91, Arg137, and Arg140. The HD domain occupies 228–329 (TGIHTMMVLA…LKVFDKADAW (102 aa)).

This sequence belongs to the tRNA nucleotidyltransferase/poly(A) polymerase family. Bacterial CCA-adding enzyme type 1 subfamily. As to quaternary structure, monomer. Can also form homodimers and oligomers. The cofactor is Mg(2+). Ni(2+) serves as cofactor.

It catalyses the reaction a tRNA precursor + 2 CTP + ATP = a tRNA with a 3' CCA end + 3 diphosphate. The enzyme catalyses a tRNA with a 3' CCA end + 2 CTP + ATP = a tRNA with a 3' CCACCA end + 3 diphosphate. Catalyzes the addition and repair of the essential 3'-terminal CCA sequence in tRNAs without using a nucleic acid template. Adds these three nucleotides in the order of C, C, and A to the tRNA nucleotide-73, using CTP and ATP as substrates and producing inorganic pyrophosphate. tRNA 3'-terminal CCA addition is required both for tRNA processing and repair. Also involved in tRNA surveillance by mediating tandem CCA addition to generate a CCACCA at the 3' terminus of unstable tRNAs. While stable tRNAs receive only 3'-terminal CCA, unstable tRNAs are marked with CCACCA and rapidly degraded. The sequence is that of Multifunctional CCA protein from Aeromonas hydrophila subsp. hydrophila (strain ATCC 7966 / DSM 30187 / BCRC 13018 / CCUG 14551 / JCM 1027 / KCTC 2358 / NCIMB 9240 / NCTC 8049).